A 1696-amino-acid polypeptide reads, in one-letter code: Proprotein convertase subtilisin/kexin type 5 (1696 aa).

The N-terminal stretch at 1-25 (MPPAIVILALFTAALCAVNLRTVAA) is a signal peptide. Positions 26–110 (DGPRIYRNEW…QQVVKRRVKR (85 aa)) are excised as a propeptide. The catalytic stretch occupies residues 111-488 (RVKRVYSMYP…GLMDAGKMVE (378 aa)). Over 111–1618 (RVKRVYSMYP…ADSIPTNVAY (1508 aa)) the chain is Extracellular. The 321-residue stretch at 167–487 (QWSDMNVEAA…FGLMDAGKMV (321 aa)) folds into the Peptidase S8 domain. Catalysis depends on charge relay system residues D192 and H233. A glycan (N-linked (GlcNAc...) asparagine) is linked at N246. Residue S407 is the Charge relay system of the active site. One can recognise a P/Homo B domain in the interval 495–638 (RVPEQHVCEE…KLILYGTAEH (144 aa)). Residue N529 is glycosylated (N-linked (GlcNAc...) asparagine). Residues 643–657 (RDEESRPHTPQTREE) are compositionally biased toward basic and acidic residues. The disordered stretch occupies residues 643–666 (RDEESRPHTPQTREEPTDEEECED). Residues 664–1649 (CEDGDYYDRS…LQARSNGRLC (986 aa)) form a CRM (Cys-rich motif) region. N885 carries N-linked (GlcNAc...) asparagine glycosylation. Residues 1619–1639 (IAVATFICVVIVVLFFVVFGM) form a helical membrane-spanning segment. The Cytoplasmic segment spans residues 1640 to 1696 (LQARSNGRLCWAHKYQQVPTTRYEKMNDHVNILSQEDFYNEDSLSEDEIHSIDSTRH).

Belongs to the peptidase S8 family.

The protein resides in the secreted. Its subcellular location is the cell membrane. Functionally, serine endoprotease that processes various proproteins by cleavage at paired basic amino acids, recognizing the RXXX[KR]R consensus motif. Likely functions in the constitutive and regulated secretory pathways. The polypeptide is Proprotein convertase subtilisin/kexin type 5 (PC6) (Branchiostoma californiense (California lancelet)).